Here is a 509-residue protein sequence, read N- to C-terminus: Maturase K (509 aa).

Belongs to the intron maturase 2 family. MatK subfamily.

The protein resides in the plastid. It is found in the chloroplast. In terms of biological role, usually encoded in the trnK tRNA gene intron. Probably assists in splicing its own and other chloroplast group II introns. The chain is Maturase K from Nicotiana clevelandii (Wild tobacco).